The sequence spans 313 residues: Protein HEXIM2 (313 aa).

A compositionally biased stretch (polar residues) spans 1 to 13; it reads MATVNHTNCNTAS. Positions 1 to 78 are disordered; that stretch reads MATVNHTNCN…RGSRTQSPGG (78 aa). Ser-28, Ser-52, Ser-75, and Ser-80 each carry phosphoserine. Residues 64–77 are compositionally biased toward polar residues; that stretch reads SSCNIRGSRTQSPG. Disordered stretches follow at residues 111–139, 155–194, and 267–313; these read EKQQ…PLAP, PNLD…DFSE, and QENE…AGDR. Basic and acidic residues predominate over residues 112 to 131; sequence KQQRDERQSQRASRVREEMF. The interaction with P-TEFb stretch occupies residues 139-142; sequence PYNT. The span at 179-194 shows a compositional bias: basic and acidic residues; it reads GQGRAHGEFQQRDFSE. Residues 207–276 adopt a coiled-coil conformation; it reads RSKQELVRDY…QENEMWNREG (70 aa). Residues 225–286 are interaction with CCNT1, HEXIM1 and HEXIM2; it reads QAEQETRRLR…GYCDQEKPAS (62 aa).

This sequence belongs to the HEXIM family. Homooligomer and heterooligomer with HEXIM1; probably dimeric. Core component of the 7SK RNP complex, at least composed of 7SK RNA, LARP7, MEPCE, HEXIM1 (or HEXIM2) and P-TEFb (composed of CDK9 and CCNT1/cyclin-T1). Interacts with CCNT2.

It localises to the nucleus. Transcriptional regulator which functions as a general RNA polymerase II transcription inhibitor. Core component of the 7SK RNP complex: in cooperation with 7SK snRNA sequesters P-TEFb in a large inactive 7SK snRNP complex preventing RNA polymerase II phosphorylation and subsequent transcriptional elongation. The chain is Protein HEXIM2 (Hexim2) from Mus musculus (Mouse).